The primary structure comprises 168 residues: Large ribosomal subunit protein uL5 (168 aa).

It belongs to the universal ribosomal protein uL5 family. As to quaternary structure, part of the 50S ribosomal subunit; contacts the 5S rRNA and probably tRNA. Forms a bridge to the 30S subunit in the 70S ribosome.

Its function is as follows. This is one of the proteins that bind and probably mediate the attachment of the 5S RNA into the large ribosomal subunit, where it forms part of the central protuberance. In the 70S ribosome it contacts protein S13 of the 30S subunit (bridge B1b), connecting the 2 subunits; this bridge is implicated in subunit movement. May contact the P site tRNA; the 5S rRNA and some of its associated proteins might help stabilize positioning of ribosome-bound tRNAs. This is Large ribosomal subunit protein uL5 from Methanospirillum hungatei JF-1 (strain ATCC 27890 / DSM 864 / NBRC 100397 / JF-1).